The sequence spans 248 residues: MIKTETSKIKLINEDNLRLDGRSFNELRPIKIEAGVLNRADGSAYIEWGGNKIIVGVYGPKEAYPKHSQDIDHAVVKARYNMAAFSVDERKRPGPDRRTMEISKVISEALSSSIMIEQFPRAEIDVYIEVLQADAGTRIAGLTAATVALADAGIPMRDMVVGCTAGKVDGHIVLDLSKEEDNFGEADIPMAIMPKTGEIVLLQMDGDVTEDEFYEATSMIIEATKKISQIQRNALLNKYKIEGIEGGE.

Belongs to the RNase PH family. Rrp41 subfamily. Component of the archaeal exosome complex. Forms a hexameric ring-like arrangement composed of 3 Rrp41-Rrp42 heterodimers. The hexameric ring associates with a trimer of Rrp4 and/or Csl4 subunits.

Its subcellular location is the cytoplasm. In terms of biological role, catalytic component of the exosome, which is a complex involved in RNA degradation. Has 3'-&gt;5' exoribonuclease activity. Can also synthesize heteromeric RNA-tails. This Thermoplasma volcanium (strain ATCC 51530 / DSM 4299 / JCM 9571 / NBRC 15438 / GSS1) protein is Exosome complex component Rrp41.